A 154-amino-acid chain; its full sequence is MQGKSIRLGIVVAEFNYDITQLMLQKALSHAKFLNAEVKVVIKVPGTFDMPLAIKKLLEKDFIDAVVTLGAVIKGETKHDEIVASQTARKIVDLSTEFNKPVTLGIIGHGATHEQAVERIEEYATRAVEAAIKLVQRTRKIDELKEVKETVIID.

5-amino-6-(D-ribitylamino)uracil contacts are provided by residues F15, 47-49 (TFD), and 71-73 (AVI). (2S)-2-hydroxy-3-oxobutyl phosphate is bound at residue 76–77 (ET). H79 serves as the catalytic Proton donor. Residue L104 participates in 5-amino-6-(D-ribitylamino)uracil binding. Residue R119 coordinates (2S)-2-hydroxy-3-oxobutyl phosphate.

Belongs to the DMRL synthase family.

The enzyme catalyses (2S)-2-hydroxy-3-oxobutyl phosphate + 5-amino-6-(D-ribitylamino)uracil = 6,7-dimethyl-8-(1-D-ribityl)lumazine + phosphate + 2 H2O + H(+). Its pathway is cofactor biosynthesis; riboflavin biosynthesis; riboflavin from 2-hydroxy-3-oxobutyl phosphate and 5-amino-6-(D-ribitylamino)uracil: step 1/2. Its function is as follows. Catalyzes the formation of 6,7-dimethyl-8-ribityllumazine by condensation of 5-amino-6-(D-ribitylamino)uracil with 3,4-dihydroxy-2-butanone 4-phosphate. This is the penultimate step in the biosynthesis of riboflavin. The chain is 6,7-dimethyl-8-ribityllumazine synthase from Saccharolobus islandicus (strain M.16.27) (Sulfolobus islandicus).